A 112-amino-acid chain; its full sequence is 2Fe-2S ferredoxin (112 aa).

One can recognise a 2Fe-2S ferredoxin-type domain in the interval 5–107 (IKVTFIINDG…GIKVHLPAAT (103 aa)). [2Fe-2S] cluster-binding residues include Cys-42, Cys-48, Cys-51, and Cys-88.

Belongs to the adrenodoxin/putidaredoxin family. It depends on [2Fe-2S] cluster as a cofactor.

In terms of biological role, ferredoxin are iron-sulfur proteins that transfer electrons in a wide variety of metabolic reactions. In Rickettsia rickettsii, this protein is 2Fe-2S ferredoxin (fdxB).